A 219-amino-acid polypeptide reads, in one-letter code: N-(5'-phosphoribosyl)anthranilate isomerase (219 aa).

This sequence belongs to the TrpF family.

The enzyme catalyses N-(5-phospho-beta-D-ribosyl)anthranilate = 1-(2-carboxyphenylamino)-1-deoxy-D-ribulose 5-phosphate. The protein operates within amino-acid biosynthesis; L-tryptophan biosynthesis; L-tryptophan from chorismate: step 3/5. The sequence is that of N-(5'-phosphoribosyl)anthranilate isomerase from Bradyrhizobium sp. (strain BTAi1 / ATCC BAA-1182).